The sequence spans 262 residues: Small ribosomal subunit protein eS1 (262 aa).

This sequence belongs to the eukaryotic ribosomal protein eS1 family. Component of the small ribosomal subunit. Mature ribosomes consist of a small (40S) and a large (60S) subunit. The 40S subunit contains about 32 different proteins and 1 molecule of RNA (18S). The 60S subunit contains about 42 different proteins and 3 molecules of RNA (28S, 5.8S and 5S).

The protein resides in the cytoplasm. In terms of biological role, component of the ribosome, a large ribonucleoprotein complex responsible for the synthesis of proteins in the cell. The small ribosomal subunit (SSU) binds messenger RNAs (mRNAs) and translates the encoded message by selecting cognate aminoacyl-transfer RNA (tRNA) molecules. The large subunit (LSU) contains the ribosomal catalytic site termed the peptidyl transferase center (PTC), which catalyzes the formation of peptide bonds, thereby polymerizing the amino acids delivered by tRNAs into a polypeptide chain. The nascent polypeptides leave the ribosome through a tunnel in the LSU and interact with protein factors that function in enzymatic processing, targeting, and the membrane insertion of nascent chains at the exit of the ribosomal tunnel. The protein is Small ribosomal subunit protein eS1 of Plasmodium falciparum (isolate 3D7).